A 208-amino-acid chain; its full sequence is 2-phospho-L-lactate guanylyltransferase (208 aa).

It belongs to the CofC family. As to quaternary structure, homodimer.

It catalyses the reaction (2S)-2-phospholactate + GTP + H(+) = (2S)-lactyl-2-diphospho-5'-guanosine + diphosphate. It participates in cofactor biosynthesis; coenzyme F420 biosynthesis. Guanylyltransferase that catalyzes the activation of (2S)-2-phospholactate (2-PL) as (2S)-lactyl-2-diphospho-5'-guanosine, via the condensation of 2-PL with GTP. It is involved in the biosynthesis of coenzyme F420, a hydride carrier cofactor. In Methanosarcina acetivorans (strain ATCC 35395 / DSM 2834 / JCM 12185 / C2A), this protein is 2-phospho-L-lactate guanylyltransferase.